The following is a 348-amino-acid chain: Structural glycoprotein p40 (348 aa).

This sequence belongs to the baculoviridae gp41 family. In terms of processing, O-glycosylated; contains N-acetylglucosamine side chains.

This is Structural glycoprotein p40 (P40) from Bombyx mori nuclear polyhedrosis virus (BmNPV).